The sequence spans 118 residues: Large ribosomal subunit protein uL18 (118 aa).

Belongs to the universal ribosomal protein uL18 family. In terms of assembly, part of the 50S ribosomal subunit; part of the 5S rRNA/L5/L18/L25 subcomplex. Contacts the 5S and 23S rRNAs.

In terms of biological role, this is one of the proteins that bind and probably mediate the attachment of the 5S RNA into the large ribosomal subunit, where it forms part of the central protuberance. The chain is Large ribosomal subunit protein uL18 from Rickettsia bellii (strain OSU 85-389).